Consider the following 447-residue polypeptide: Probable arabinosyltransferase ARAD1 (447 aa).

Over 1–6 (MARKSS) the chain is Cytoplasmic. Residues 7–29 (LLKRAAIAVVSVIAIYVILNASV) traverse the membrane as a helical; Signal-anchor for type II membrane protein segment. Residues 30-447 (SRSLPSSSDL…TNQTGLITSI (418 aa)) are Lumenal-facing. Low complexity predominate over residues 32 to 41 (SLPSSSDLPR). The interval 32-52 (SLPSSSDLPRQLIREDDDDEG) is disordered. N-linked (GlcNAc...) asparagine glycosylation is found at N427, N432, and N439.

This sequence belongs to the glycosyltransferase 47 family. As to quaternary structure, homodimer and heterodimer with ARAD2. Expressed in root vasculature, cotyledons, leaves, stems, vascular tissue of sepals, petals and stamens, pollen grains, mature siliques and abscission region of seeds.

The protein localises to the golgi apparatus membrane. In terms of biological role, probable arabinosyl transferase responsible for the polymerization of arabinose into the arabinan of arabinogalactan. May function as inverting enzyme using UDP-beta-L-arabinopyranoside. May be important for arabinan side chains of rhamnogalacturonan I (RG-I), a major component of pectins. Cell wall pectic arabinans are involved in thigmomorphogenesis response of inflorescence stems to mechanical stress. This is Probable arabinosyltransferase ARAD1 (ARAD1) from Arabidopsis thaliana (Mouse-ear cress).